The following is a 691-amino-acid chain: Glycine--tRNA ligase beta subunit (691 aa).

This sequence belongs to the class-II aminoacyl-tRNA synthetase family. Tetramer of two alpha and two beta subunits.

The protein resides in the cytoplasm. It carries out the reaction tRNA(Gly) + glycine + ATP = glycyl-tRNA(Gly) + AMP + diphosphate. This Levilactobacillus brevis (strain ATCC 367 / BCRC 12310 / CIP 105137 / JCM 1170 / LMG 11437 / NCIMB 947 / NCTC 947) (Lactobacillus brevis) protein is Glycine--tRNA ligase beta subunit.